The primary structure comprises 190 residues: Holliday junction branch migration complex subunit RuvA (190 aa).

The domain I stretch occupies residues 1 to 64 (MIGRITGTLI…EDAQLLYGFG (64 aa)). Residues 65–137 (SSAERSTFRE…MRGKLGADIG (73 aa)) form a domain II region. The segment at 137-141 (GATPH) is flexible linker. The tract at residues 142–190 (AASGHQSDILNALLALGYSDKESQAALKKLPDGVDVSEGIRLALKALVR) is domain III.

The protein belongs to the RuvA family. As to quaternary structure, homotetramer. Forms an RuvA(8)-RuvB(12)-Holliday junction (HJ) complex. HJ DNA is sandwiched between 2 RuvA tetramers; dsDNA enters through RuvA and exits via RuvB. An RuvB hexamer assembles on each DNA strand where it exits the tetramer. Each RuvB hexamer is contacted by two RuvA subunits (via domain III) on 2 adjacent RuvB subunits; this complex drives branch migration. In the full resolvosome a probable DNA-RuvA(4)-RuvB(12)-RuvC(2) complex forms which resolves the HJ.

It localises to the cytoplasm. In terms of biological role, the RuvA-RuvB-RuvC complex processes Holliday junction (HJ) DNA during genetic recombination and DNA repair, while the RuvA-RuvB complex plays an important role in the rescue of blocked DNA replication forks via replication fork reversal (RFR). RuvA specifically binds to HJ cruciform DNA, conferring on it an open structure. The RuvB hexamer acts as an ATP-dependent pump, pulling dsDNA into and through the RuvAB complex. HJ branch migration allows RuvC to scan DNA until it finds its consensus sequence, where it cleaves and resolves the cruciform DNA. In Bordetella pertussis (strain Tohama I / ATCC BAA-589 / NCTC 13251), this protein is Holliday junction branch migration complex subunit RuvA.